We begin with the raw amino-acid sequence, 336 residues long: tRNA N6-adenosine threonylcarbamoyltransferase (336 aa).

Histidine 112 and histidine 116 together coordinate Fe cation. Substrate is bound by residues 136–140 (LVSGG), aspartate 169, glycine 182, and asparagine 276. Aspartate 304 contacts Fe cation.

The protein belongs to the KAE1 / TsaD family. Fe(2+) serves as cofactor.

It is found in the cytoplasm. The enzyme catalyses L-threonylcarbamoyladenylate + adenosine(37) in tRNA = N(6)-L-threonylcarbamoyladenosine(37) in tRNA + AMP + H(+). Required for the formation of a threonylcarbamoyl group on adenosine at position 37 (t(6)A37) in tRNAs that read codons beginning with adenine. Is involved in the transfer of the threonylcarbamoyl moiety of threonylcarbamoyl-AMP (TC-AMP) to the N6 group of A37, together with TsaE and TsaB. TsaD likely plays a direct catalytic role in this reaction. The protein is tRNA N6-adenosine threonylcarbamoyltransferase of Francisella tularensis subsp. tularensis (strain FSC 198).